Consider the following 104-residue polypeptide: Protein KleF (104 aa).

The protein is Protein KleF (kleF) of Escherichia coli.